A 156-amino-acid polypeptide reads, in one-letter code: MNVIEGGVAAPNAKIAIVISRFNSFINESLLSGAIDTLKRFGQVSEENITVVRCPGAVELPLVAQRVAKTAKYDAIVSLGSVIRGGTPHFDYVCSECNKGLAQVSLEYSIPVAFGVLTVDTIDQAIERAGTKAGNKGAEAALSALEMINVLSQIES.

Residues Phe-22, 57–59 (AVE), and 81–83 (SVI) each bind 5-amino-6-(D-ribitylamino)uracil. 86–87 (GT) is a (2S)-2-hydroxy-3-oxobutyl phosphate binding site. The active-site Proton donor is His-89. Phe-114 serves as a coordination point for 5-amino-6-(D-ribitylamino)uracil. A (2S)-2-hydroxy-3-oxobutyl phosphate-binding site is contributed by Arg-128.

It belongs to the DMRL synthase family. In terms of assembly, forms an icosahedral capsid composed of 60 subunits, arranged as a dodecamer of pentamers.

The catalysed reaction is (2S)-2-hydroxy-3-oxobutyl phosphate + 5-amino-6-(D-ribitylamino)uracil = 6,7-dimethyl-8-(1-D-ribityl)lumazine + phosphate + 2 H2O + H(+). Its pathway is cofactor biosynthesis; riboflavin biosynthesis; riboflavin from 2-hydroxy-3-oxobutyl phosphate and 5-amino-6-(D-ribitylamino)uracil: step 1/2. Functionally, catalyzes the formation of 6,7-dimethyl-8-ribityllumazine by condensation of 5-amino-6-(D-ribitylamino)uracil with 3,4-dihydroxy-2-butanone 4-phosphate. This is the penultimate step in the biosynthesis of riboflavin. This Aliivibrio fischeri (strain ATCC 700601 / ES114) (Vibrio fischeri) protein is 6,7-dimethyl-8-ribityllumazine synthase.